Here is a 227-residue protein sequence, read N- to C-terminus: Transcriptional regulatory protein TdiR (227 aa).

The region spanning 11–125 is the Response regulatory domain; it reads TVFVVDDEAS…DLLDAVNAAL (115 aa). Asp60 is subject to 4-aspartylphosphate. The 66-residue stretch at 141–206 folds into the HTH luxR-type domain; it reads HLDLLATLSQ…DLMHFVMRGS (66 aa). The segment at residues 165 to 184 is a DNA-binding region (H-T-H motif); that stretch reads SKEIAKLLGISYKTVEAHRG.

In terms of processing, phosphorylated by TdiS.

Functionally, member of the two-component regulatory system TdiR/TdiS, which probably regulates transcription of toluene catabolic genes (bss operon). Binds to DNA. The polypeptide is Transcriptional regulatory protein TdiR (tdiR) (Thauera aromatica).